The primary structure comprises 888 residues: Glutamate receptor 3 (888 aa).

A signal peptide spans 1–22; it reads MGQSVLRAVFFLVLGLLGHSHG. The Extracellular portion of the chain corresponds to 23–546; sequence GFPNTISIGG…GVFSFLDPLA (524 aa). N-linked (GlcNAc...) asparagine glycosylation is found at N57, N260, N374, N409, and N416. A disulfide bond links C85 and C334. 3 residues coordinate L-glutamate: P502, T504, and R509. The helical transmembrane segment at 547 to 567 threads the bilayer; it reads YEIWMCIVFAYIGVSVVLFLV. The Cytoplasmic portion of the chain corresponds to 568 to 596; it reads SRFSPYEWHLEDNNEEPRDPQSPPDPPNE. An intramembrane region (helical; Pore-forming) is located at residues 597–612; the sequence is FGIFNSLWFSLGAFMQ. Residues 613–615 lie within the membrane without spanning it; the sequence is QGC. C615 carries S-palmitoyl cysteine lipidation. At 616 to 621 the chain is on the cytoplasmic side; it reads DISPRS. A helical transmembrane segment spans residues 622–642; it reads LSGRIVGGVWWFFTLIIISSY. Topologically, residues 643–817 are extracellular; it reads TANLAAFLTV…DKTSALSLSN (175 aa). L-glutamate-binding residues include S680, T681, and E731. Residues C744 and C799 are joined by a disulfide bond. A helical membrane pass occupies residues 818 to 838; the sequence is VAGVFYILVGGLGLAMMVALI. At 839 to 888 the chain is on the cytoplasmic side; that stretch reads EFCYKSRAESKRMKLTKNTQNFKPAPATNTQNYATYREGYNVYGTESVKI. C841 is lipidated: S-palmitoyl cysteine. Phosphotyrosine is present on residues Y871 and Y881.

Belongs to the glutamate-gated ion channel (TC 1.A.10.1) family. GRIA3 subfamily. Homotetramer or heterotetramer of pore-forming glutamate receptor subunits. Tetramers may be formed by the dimerization of dimers. Interacts with PICK1, GRIP1 and GRIP2. Found in a complex with GRIA1, GRIA2, GRIA4, CNIH2, CNIH3, CACNG2, CACNG3, CACNG4, CACNG5, CACNG7 and CACNG8. Interacts with CACNG5. Found in a complex with GRIA1, GRIA2, GRIA4, DLG4, CACNG8 and CNIH2.

It is found in the cell membrane. The protein localises to the postsynaptic cell membrane. It localises to the postsynaptic density membrane. The enzyme catalyses Ca(2+)(in) = Ca(2+)(out). Ionotropic glutamate receptor that functions as a ligand-gated cation channel, gated by L-glutamate and glutamatergic agonists such as alpha-amino-3-hydroxy-5-methyl-4-isoxazolepropionic acid (AMPA), quisqualic acid, and kainic acid. L-glutamate acts as an excitatory neurotransmitter at many synapses in the central nervous system and plays an important role in fast excitatory synaptic transmission by inducing long-term potentiation. Binding of the excitatory neurotransmitter L-glutamate induces a conformation change, leading to the opening of the cation channel, and thereby converts the chemical signal to an electrical impulse upon entry of calcium. The receptor then desensitizes rapidly and enters a transient inactive state, characterized by the presence of bound agonist. In the presence of CACNG8, shows resensitization which is characterized by a delayed accumulation of current flux upon continued application of glutamate. In Rattus norvegicus (Rat), this protein is Glutamate receptor 3.